We begin with the raw amino-acid sequence, 385 residues long: Chaperone protein DnaJ 2 (385 aa).

The region spanning 10-75 is the J domain; sequence DYYKELGVSS…AKRKEYDETR (66 aa). A CR-type zinc finger spans residues 155–233; it reads GVTVPLRMTS…CHGSGIQNRT (79 aa). 8 residues coordinate Zn(2+): Cys-168, Cys-171, Cys-185, Cys-188, Cys-207, Cys-210, Cys-221, and Cys-224. CXXCXGXG motif repeat units lie at residues 168-175, 185-192, 207-214, and 221-228; these read CTTCHGSG, CPICNGTG, CDGCRGTG, and CVDCHGSG.

The protein belongs to the DnaJ family. As to quaternary structure, homodimer. The cofactor is Zn(2+).

It localises to the cytoplasm. Its function is as follows. Participates actively in the response to hyperosmotic and heat shock by preventing the aggregation of stress-denatured proteins and by disaggregating proteins, also in an autonomous, DnaK-independent fashion. Unfolded proteins bind initially to DnaJ; upon interaction with the DnaJ-bound protein, DnaK hydrolyzes its bound ATP, resulting in the formation of a stable complex. GrpE releases ADP from DnaK; ATP binding to DnaK triggers the release of the substrate protein, thus completing the reaction cycle. Several rounds of ATP-dependent interactions between DnaJ, DnaK and GrpE are required for fully efficient folding. Also involved, together with DnaK and GrpE, in the DNA replication of plasmids through activation of initiation proteins. In Nocardia farcinica (strain IFM 10152), this protein is Chaperone protein DnaJ 2.